A 404-amino-acid polypeptide reads, in one-letter code: Argininosuccinate synthase (404 aa).

ATP is bound by residues 10–18 and Ala37; that span reads AYSGGLDTS. L-citrulline-binding residues include Tyr90 and Ser95. Residue Gly120 coordinates ATP. Residues Thr122, Asn126, and Asp127 each contribute to the L-aspartate site. Asn126 provides a ligand contact to L-citrulline. Residues Arg130, Ser181, Ser190, Glu266, and Tyr278 each coordinate L-citrulline.

The protein belongs to the argininosuccinate synthase family. Type 1 subfamily. As to quaternary structure, homotetramer.

The protein resides in the cytoplasm. It carries out the reaction L-citrulline + L-aspartate + ATP = 2-(N(omega)-L-arginino)succinate + AMP + diphosphate + H(+). The protein operates within amino-acid biosynthesis; L-arginine biosynthesis; L-arginine from L-ornithine and carbamoyl phosphate: step 2/3. This is Argininosuccinate synthase from Erythrobacter litoralis (strain HTCC2594).